We begin with the raw amino-acid sequence, 301 residues long: HTH-type transcriptional regulator AbaB (301 aa).

Positions methionine 1–threonine 58 constitute an HTH lysR-type domain. Residues phenylalanine 18–arginine 37 constitute a DNA-binding region (H-T-H motif).

The protein belongs to the LysR transcriptional regulatory family.

Functionally, putative regulator that may be involved in stimulating antibiotic production in S.antibioticus. This Streptomyces antibioticus protein is HTH-type transcriptional regulator AbaB.